The chain runs to 332 residues: Cell growth regulator with RING finger domain protein 1 (332 aa).

The RING-type zinc finger occupies C274 to R309.

It localises to the nucleus. Its subcellular location is the endoplasmic reticulum. Functionally, able to inhibit growth in several cell lines. This chain is Cell growth regulator with RING finger domain protein 1 (Cgrrf1), found in Mus musculus (Mouse).